The primary structure comprises 418 residues: UDP-N-acetylglucosamine 1-carboxyvinyltransferase (418 aa).

22–23 provides a ligand contact to phosphoenolpyruvate; it reads KN. Arginine 92 lines the UDP-N-acetyl-alpha-D-glucosamine pocket. The active-site Proton donor is cysteine 116. Position 116 is a 2-(S-cysteinyl)pyruvic acid O-phosphothioketal (cysteine 116). UDP-N-acetyl-alpha-D-glucosamine-binding positions include 121-125, aspartate 305, and isoleucine 327; that span reads RPVDL.

This sequence belongs to the EPSP synthase family. MurA subfamily.

It is found in the cytoplasm. The enzyme catalyses phosphoenolpyruvate + UDP-N-acetyl-alpha-D-glucosamine = UDP-N-acetyl-3-O-(1-carboxyvinyl)-alpha-D-glucosamine + phosphate. The protein operates within cell wall biogenesis; peptidoglycan biosynthesis. Functionally, cell wall formation. Adds enolpyruvyl to UDP-N-acetylglucosamine. The polypeptide is UDP-N-acetylglucosamine 1-carboxyvinyltransferase (Acidiphilium cryptum (strain JF-5)).